A 348-amino-acid chain; its full sequence is Phosphate acyltransferase (348 aa).

The protein belongs to the PlsX family. In terms of assembly, homodimer. Probably interacts with PlsY.

Its subcellular location is the cytoplasm. It carries out the reaction a fatty acyl-[ACP] + phosphate = an acyl phosphate + holo-[ACP]. The protein operates within lipid metabolism; phospholipid metabolism. Its function is as follows. Catalyzes the reversible formation of acyl-phosphate (acyl-PO(4)) from acyl-[acyl-carrier-protein] (acyl-ACP). This enzyme utilizes acyl-ACP as fatty acyl donor, but not acyl-CoA. The sequence is that of Phosphate acyltransferase from Oenococcus oeni (strain ATCC BAA-331 / PSU-1).